Here is a 79-residue protein sequence, read N- to C-terminus: Short neurotoxin 2 (79 aa).

The first 19 residues, 1-19, serve as a signal peptide directing secretion; that stretch reads PLLLTLVVVTIVCLDLGYT. Cystine bridges form between Cys-22/Cys-41, Cys-36/Cys-58, Cys-60/Cys-71, and Cys-72/Cys-77.

Belongs to the three-finger toxin family. Short-chain subfamily. Type I alpha-neurotoxin sub-subfamily. As to expression, expressed by the venom gland.

It is found in the secreted. Functionally, binds to muscle nicotinic acetylcholine receptor (nAChR) and inhibit acetylcholine from binding to the receptor, thereby impairing neuromuscular transmission. The polypeptide is Short neurotoxin 2 (Hydrophis cyanocinctus (Asian annulated sea snake)).